The following is a 947-amino-acid chain: Bifunctional glutamine synthetase adenylyltransferase/adenylyl-removing enzyme (947 aa).

Positions 1-440 are adenylyl removase; it reads MTPLSSPLSQ…VFNELIGDDE (440 aa). The segment at 450–947 is adenylyl transferase; it reads SEPWREVWQD…ASWRKWLVAV (498 aa).

This sequence belongs to the GlnE family. Requires Mg(2+) as cofactor.

It catalyses the reaction [glutamine synthetase]-O(4)-(5'-adenylyl)-L-tyrosine + phosphate = [glutamine synthetase]-L-tyrosine + ADP. The catalysed reaction is [glutamine synthetase]-L-tyrosine + ATP = [glutamine synthetase]-O(4)-(5'-adenylyl)-L-tyrosine + diphosphate. Involved in the regulation of glutamine synthetase GlnA, a key enzyme in the process to assimilate ammonia. When cellular nitrogen levels are high, the C-terminal adenylyl transferase (AT) inactivates GlnA by covalent transfer of an adenylyl group from ATP to specific tyrosine residue of GlnA, thus reducing its activity. Conversely, when nitrogen levels are low, the N-terminal adenylyl removase (AR) activates GlnA by removing the adenylyl group by phosphorolysis, increasing its activity. The regulatory region of GlnE binds the signal transduction protein PII (GlnB) which indicates the nitrogen status of the cell. This is Bifunctional glutamine synthetase adenylyltransferase/adenylyl-removing enzyme from Salmonella paratyphi A (strain ATCC 9150 / SARB42).